The following is a 300-amino-acid chain: MARDRTRPEDFTRPLRRILVGGLVLLLLGIFLIWRIDSPRVEQFRAALIDRVVPSFEWLMTPMTKVAGMVENFQSYTRIYEQNQELRRELQQMKAWKEAALQLEQKNARLLDLNQVRLDPKLTHVTGVVLADSGSPFRQSVLLNVGARDGIRDGWATMDGIGLVGRISGVGRTTSRVILLTDTSSRIPVTVQPSGQRALLTGDNSPSPPLEFLDKPDLVRPGDRVVTSGDGGVFPADLLVGQVAQGPDRRLRVRLAADYGRLEFLRVLRSHELEPISDPGKLVAEPPAPPAPAAVEGADG.

The Cytoplasmic portion of the chain corresponds to methionine 1–arginine 17. The chain crosses the membrane as a helical span at residues isoleucine 18–serine 38. Residues proline 39–glycine 300 are Periplasmic-facing. Residues glutamine 74–arginine 117 are a coiled coil. A disordered region spans residues serine 277–glycine 300.

This sequence belongs to the MreC family.

It is found in the cell inner membrane. Functionally, involved in formation and maintenance of cell shape. The polypeptide is Cell shape-determining protein MreC (Cereibacter sphaeroides (Rhodobacter sphaeroides)).